A 210-amino-acid chain; its full sequence is MKKEDPNLSLFSFLDEDIICGVDEAGRGPLAGPVFAAAVILDPMRPIDGLRDSKKLTEVKRDALAIEIKQYALSWSIAQCSEEEIDSLNILQATMLAMRRAIEGLHVVPTLALIDGNRCPVTSVRSEAIIKGDDKVQAISAASILAKTARDHALGLLHIQYPHYAFDQHKGYPTALHLERLREHGVSPVHRKSYAPVRALLGGVTPANKV.

Residues 17-206 (DIICGVDEAG…VRALLGGVTP (190 aa)) form the RNase H type-2 domain. A divalent metal cation contacts are provided by aspartate 23, glutamate 24, and aspartate 115.

It belongs to the RNase HII family. It depends on Mn(2+) as a cofactor. The cofactor is Mg(2+).

It localises to the cytoplasm. The enzyme catalyses Endonucleolytic cleavage to 5'-phosphomonoester.. Its function is as follows. Endonuclease that specifically degrades the RNA of RNA-DNA hybrids. The sequence is that of Ribonuclease HII from Janthinobacterium sp. (strain Marseille) (Minibacterium massiliensis).